Consider the following 957-residue polypeptide: Glycine dehydrogenase (decarboxylating) (957 aa).

Lysine 708 carries the N6-(pyridoxal phosphate)lysine modification.

Belongs to the GcvP family. The glycine cleavage system is composed of four proteins: P, T, L and H. Pyridoxal 5'-phosphate is required as a cofactor.

It catalyses the reaction N(6)-[(R)-lipoyl]-L-lysyl-[glycine-cleavage complex H protein] + glycine + H(+) = N(6)-[(R)-S(8)-aminomethyldihydrolipoyl]-L-lysyl-[glycine-cleavage complex H protein] + CO2. Functionally, the glycine cleavage system catalyzes the degradation of glycine. The P protein binds the alpha-amino group of glycine through its pyridoxal phosphate cofactor; CO(2) is released and the remaining methylamine moiety is then transferred to the lipoamide cofactor of the H protein. The sequence is that of Glycine dehydrogenase (decarboxylating) from Pectobacterium atrosepticum (strain SCRI 1043 / ATCC BAA-672) (Erwinia carotovora subsp. atroseptica).